An 849-amino-acid polypeptide reads, in one-letter code: Probable receptor-like protein kinase At1g30570 (849 aa).

The first 28 residues, 1 to 28, serve as a signal peptide directing secretion; the sequence is MSKLRKKYLEHLLCVLIFFTYVIGYGEA. The Extracellular segment spans residues 29-429; that stretch reads QSKSFLVDCG…GHSVSDSKMR (401 aa). N-linked (GlcNAc...) asparagine glycosylation is found at Asn40, Asn57, Asn94, Asn122, Asn158, Asn268, Asn271, Asn305, and Asn343. Residues 430-450 traverse the membrane as a helical segment; the sequence is IIWISVGAGIAIIIFFVFLGI. The Cytoplasmic portion of the chain corresponds to 451–849; that stretch reads LVVCLCKKRR…QTGSALHNSA (399 aa). In terms of domain architecture, Protein kinase spans 520-793; the sequence is FDDGLAIGVG…GEVLWSLEYV (274 aa). ATP contacts are provided by residues 526–534 and Lys548; that span reads IGVGGFGKV. Catalysis depends on Asp644, which acts as the Proton acceptor. Positions 810–849 are disordered; sequence FSSSQAVEEAPESFTLPACSNQDSSETEQSQTGSALHNSA. Residues 827–849 are compositionally biased toward polar residues; sequence ACSNQDSSETEQSQTGSALHNSA.

Belongs to the protein kinase superfamily. Ser/Thr protein kinase family.

The protein localises to the cell membrane. The sequence is that of Probable receptor-like protein kinase At1g30570 from Arabidopsis thaliana (Mouse-ear cress).